The chain runs to 478 residues: Glycogen synthase (478 aa).

Position 16 (Lys16) interacts with ADP-alpha-D-glucose.

Belongs to the glycosyltransferase 1 family. Bacterial/plant glycogen synthase subfamily.

It carries out the reaction [(1-&gt;4)-alpha-D-glucosyl](n) + ADP-alpha-D-glucose = [(1-&gt;4)-alpha-D-glucosyl](n+1) + ADP + H(+). The protein operates within glycan biosynthesis; glycogen biosynthesis. Synthesizes alpha-1,4-glucan chains using ADP-glucose. The polypeptide is Glycogen synthase (Lachnoclostridium phytofermentans (strain ATCC 700394 / DSM 18823 / ISDg) (Clostridium phytofermentans)).